The following is a 241-amino-acid chain: Glucosamine-6-phosphate deaminase (241 aa).

The Proton acceptor; for enolization step role is filled by D67. The active-site For ring-opening step is N136. H138 acts as the Proton acceptor; for ring-opening step in catalysis. E143 functions as the For ring-opening step in the catalytic mechanism.

Belongs to the glucosamine/galactosamine-6-phosphate isomerase family. NagB subfamily.

The enzyme catalyses alpha-D-glucosamine 6-phosphate + H2O = beta-D-fructose 6-phosphate + NH4(+). The protein operates within amino-sugar metabolism; N-acetylneuraminate degradation; D-fructose 6-phosphate from N-acetylneuraminate: step 5/5. Functionally, catalyzes the reversible isomerization-deamination of glucosamine 6-phosphate (GlcN6P) to form fructose 6-phosphate (Fru6P) and ammonium ion. In Clostridium tetani (strain Massachusetts / E88), this protein is Glucosamine-6-phosphate deaminase.